The chain runs to 215 residues: Pyridoxine/pyridoxamine 5'-phosphate oxidase (215 aa).

Residues 9–12 (RRDY) and Lys69 contribute to the substrate site. Residues 64–69 (RVLLLK), 79–80 (FT), Lys86, and Gln108 contribute to the FMN site. Residues Tyr126, Arg130, and Ser134 each contribute to the substrate site. Residues 143–144 (QS) and Trp188 contribute to the FMN site. 194 to 196 (RLH) lines the substrate pocket. Arg198 is an FMN binding site.

Belongs to the pyridoxamine 5'-phosphate oxidase family. In terms of assembly, homodimer. FMN is required as a cofactor.

The catalysed reaction is pyridoxamine 5'-phosphate + O2 + H2O = pyridoxal 5'-phosphate + H2O2 + NH4(+). The enzyme catalyses pyridoxine 5'-phosphate + O2 = pyridoxal 5'-phosphate + H2O2. It functions in the pathway cofactor metabolism; pyridoxal 5'-phosphate salvage; pyridoxal 5'-phosphate from pyridoxamine 5'-phosphate: step 1/1. The protein operates within cofactor metabolism; pyridoxal 5'-phosphate salvage; pyridoxal 5'-phosphate from pyridoxine 5'-phosphate: step 1/1. Its function is as follows. Catalyzes the oxidation of either pyridoxine 5'-phosphate (PNP) or pyridoxamine 5'-phosphate (PMP) into pyridoxal 5'-phosphate (PLP). The protein is Pyridoxine/pyridoxamine 5'-phosphate oxidase of Pseudomonas entomophila (strain L48).